The chain runs to 166 residues: UBA-like domain-containing protein 2 (166 aa).

The interval 120–166 (QQPVWLPPASPTTHLHHHHHHPQPVWPPNSQPTGGPQKAMAAMDGQR) is disordered.

Belongs to the UBALD family.

This is UBA-like domain-containing protein 2 (ubald2) from Xenopus tropicalis (Western clawed frog).